Here is a 135-residue protein sequence, read N- to C-terminus: MASSSSPIFLMIIFSMWLLFSYSESTEYLVRDSENSWKVNFPSRDALNRWVTRHQLTIHDTIDVVDEDDCNTEIRSKLGGDFVVTKRPLVLPPLITLPLSPSPAPAPSLSGAAAGHGFIVWLGASLPMLMFLIWL.

Residues 1–23 (MASSSSPIFLMIIFSMWLLFSYS) form the signal peptide.

Invasion zone and early symbiotic zone.

Involved in the infection process during the plant-rhizobium interaction. The polypeptide is Early nodulin-5 (ENOD5) (Pisum sativum (Garden pea)).